We begin with the raw amino-acid sequence, 98 residues long: MAQLVRDRIPELIRASGRTPVIRTLSDDEYWAALDAKLDEEVAELRAADTRDAALEGGRHRHRGESASGNGIQHGVPPNVALIPSGSTLLTPARSGHV.

A disordered region spans residues 53 to 98 (AALEGGRHRHRGESASGNGIQHGVPPNVALIPSGSTLLTPARSGHV).

This is an uncharacterized protein from Mycolicibacterium smegmatis (strain ATCC 700084 / mc(2)155) (Mycobacterium smegmatis).